Consider the following 370-residue polypeptide: DNA replication and repair protein RecF (370 aa).

Position 30-37 (30-37 (GENAQGKT)) interacts with ATP.

Belongs to the RecF family.

Its subcellular location is the cytoplasm. Functionally, the RecF protein is involved in DNA metabolism; it is required for DNA replication and normal SOS inducibility. RecF binds preferentially to single-stranded, linear DNA. It also seems to bind ATP. The protein is DNA replication and repair protein RecF of Listeria welshimeri serovar 6b (strain ATCC 35897 / DSM 20650 / CCUG 15529 / CIP 8149 / NCTC 11857 / SLCC 5334 / V8).